A 1256-amino-acid chain; its full sequence is Protein flightless-1 (1256 aa).

LRR repeat units lie at residues 4–28 (LPFV…MRQM), 29–51 (SRVQ…LGHL), 52–74 (QKLE…LTEL), 75–99 (SCLR…LFHL), 100–122 (EELT…LERA), 124–145 (NLIV…LFIH), 147–169 (TDLL…TRRL), 171–192 (NLKT…QLPS), 218–241 (LANL…VYNV), 243–264 (TLVR…VELW), 265–287 (QRLE…LCKL), 289–312 (KLRR…IGKL), 313–335 (GALE…LCRC), 336–358 (GALK…IHLL), and 360–381 (GLDQ…PSEA). A disordered region spans residues 405–476 (AAVPPSMPSS…ESLKPKRWDE (72 aa)). The segment covering 431 to 476 (PRSEGDQDAAKVLKGMKDVAKDKDNEAGAVPEDGKPESLKPKRWDE) has biased composition (basic and acidic residues). Gelsolin-like repeat units follow at residues 512–589 (IEEV…EQFL), 633–703 (EPVA…AEFW), 749–822 (VELP…MQIF), and 1168–1242 (EKCA…SRRF).

It belongs to the villin/gelsolin family. Found in ovaries, larval fat bodies, brain and adult thorax.

Functionally, may play a key role in embryonic cellularization by interacting with both the cytoskeleton and other cellular components. Alternatively, it may play a structural role in indirect flight muscle. Vital for embryonic development. In Drosophila melanogaster (Fruit fly), this protein is Protein flightless-1 (fliI).